A 209-amino-acid chain; its full sequence is Glycolipid transfer protein B (209 aa).

2 consecutive repeat copies span residues 45-55 and 56-66. Residues 45–66 form a 2 X 12 AA approximate tandem repeats region; the sequence is IKADITGNITKIRSVYESNPTQ. 48–55 lines the beta-D-galactosyl-(1-&gt;4)-beta-D-glucosyl-(1&lt;-&gt;1)-N-[(9Z)-octadecenoyl]-sphing-4-enine pocket; the sequence is DITGNITK. 2 residues coordinate beta-D-galactosyl-(1-&gt;4)-beta-D-glucosyl-(1&lt;-&gt;1)-N-[(9Z)-octadecenoyl]-sphing-4-enine: His-140 and Tyr-207.

The protein belongs to the GLTP family.

It is found in the cytoplasm. Functionally, accelerates the intermembrane transfer of various glycolipids. Catalyzes the transfer of various glycosphingolipids between membranes but does not catalyze the transfer of phospholipids. May be involved in the intracellular translocation of glucosylceramides. In Xenopus laevis (African clawed frog), this protein is Glycolipid transfer protein B (gltp-b).